Here is a 218-residue protein sequence, read N- to C-terminus: Glutathione S-transferase Mu 1 (218 aa).

Residues 2–88 enclose the GST N-terminal domain; sequence PMILGYWDIR…YIARKHNLCG (87 aa). Glutathione is bound by residues 7–8, 43–46, Lys-50, 59–60, and 72–73; these read YW, RSQW, NL, and QS. Residues 90–208 enclose the GST C-terminal domain; it reads TEEEMIRVDI…KSSRFLPGPL (119 aa). Tyr-116 provides a ligand contact to substrate.

Belongs to the GST superfamily. Mu family. Homodimer.

It is found in the cytoplasm. The catalysed reaction is RX + glutathione = an S-substituted glutathione + a halide anion + H(+). It carries out the reaction prostaglandin A2 + glutathione = prostaglandin A2-S-(R)-glutathione. The enzyme catalyses prostaglandin J2 + glutathione = prostaglandin J2-S-(R)-glutathione. It catalyses the reaction prostaglandin J2 + glutathione = prostaglandin J2-S-(S)-glutathione. The catalysed reaction is prostaglandin A2 + glutathione = prostaglandin A2-S-(S)-glutathione. It carries out the reaction 11(S)-hydroxy-14(S),15(S)-epoxy-(5Z,8Z,12E)-eicosatrienoate + glutathione = (11S,15S)-dihydroxy-14(R)-S-glutathionyl-(5Z,8Z,12E)-eicosatrienoate. Its function is as follows. Conjugation of reduced glutathione to a wide number of exogenous and endogenous hydrophobic electrophiles. Protects against the thiol-mediated metal-catalyzed oxidative inactivation of enzymes. Involved in the formation of glutathione conjugates of both prostaglandin A2 (PGA2) and prostaglandin J2 (PGJ2). Participates in the formation of novel hepoxilin regioisomers. This is Glutathione S-transferase Mu 1 (GSTM1) from Bos taurus (Bovine).